The chain runs to 41 residues: Photosystem I reaction center subunit IX (41 aa).

A helical transmembrane segment spans residues 7 to 27; the sequence is YLSTAPVIALAWMSFTAGLLI.

It belongs to the PsaJ family.

The protein resides in the plastid. The protein localises to the chloroplast thylakoid membrane. Its function is as follows. May help in the organization of the PsaE and PsaF subunits. The sequence is that of Photosystem I reaction center subunit IX from Tupiella akineta (Green alga).